The following is a 59-amino-acid chain: Large ribosomal subunit protein bL32 (59 aa).

The interval 1–59 (MAVQQNKKSPSKRGMHRAHDFLTTPPLAVESTTGEAHLRHHISPAGFYRGKKVTKGKGE) is disordered. The segment covering 49–59 (RGKKVTKGKGE) has biased composition (basic residues).

Belongs to the bacterial ribosomal protein bL32 family.

This chain is Large ribosomal subunit protein bL32, found in Dechloromonas aromatica (strain RCB).